The chain runs to 156 residues: MRKTIMKYLPALAGIIFTAGWFLWIDGHVYENTNNKNADFDGPHIQWIYYLPGIFATLGMVMANIVDLSALNSNSLLFDGGATKVRVWLFISFAISFGCIGAALWIMVAVFLPPHNTNDAAQWPGIAITLQTSLIFLSSLLLVFKKVRQDDEYDQF.

4 helical membrane-spanning segments follow: residues Ile-5 to Ile-25, Ile-45 to Ile-65, Val-87 to Met-107, and Pro-124 to Phe-144.

This sequence belongs to the UPF0220 family.

It is found in the membrane. This Dictyostelium discoideum (Social amoeba) protein is Transmembrane protein 50 homolog (tmem50).